A 315-amino-acid chain; its full sequence is Putative heme-binding peroxidase (315 aa).

His40 acts as the Proton acceptor in catalysis. His169 lines the heme b pocket. Residue Trp185 is the Tryptophan radical intermediate of the active site. Positions 267–286 (EEGKPLDKTAPPAGDETCPV) are disordered.

This sequence belongs to the peroxidase family. Cytochrome c peroxidase subfamily. Requires heme b as cofactor.

In terms of biological role, destroys radicals which are normally produced within the cells and which are toxic to biological systems. The sequence is that of Putative heme-binding peroxidase from Cryptococcus neoformans var. neoformans serotype D (strain B-3501A) (Filobasidiella neoformans).